A 224-amino-acid chain; its full sequence is Mammalian ependymin-related protein 1 (224 aa).

Positions 1–37 are cleaved as a signal peptide; the sequence is MPARAPRRLVQGPRGTWLLGSLWVWVLCGLGMAGSLG. 3 cysteine pairs are disulfide-bonded: Cys42–Cys172, Cys88–Cys222, and Cys113–Cys210. 2 N-linked (GlcNAc...) asparagine glycosylation sites follow: Asn130 and Asn182.

The protein belongs to the ependymin family. In terms of assembly, homodimer. N-glycosylated; the glycan contains mannose-6-phosphate moieties. In terms of tissue distribution, detected in brain, small intestine and in soleus, extensor digitorum longus and white gastrocnemius (at protein level). Detected in brain and skeletal muscle, and at lower leavels in heart.

It localises to the lysosome lumen. It is found in the secreted. Functionally, binds anionic lipids and gangliosides at acidic pH. The polypeptide is Mammalian ependymin-related protein 1 (Epdr1) (Mus musculus (Mouse)).